The sequence spans 157 residues: MRSILILLSLLLTIAFASASFPYQCGPYSCQFGQVCRIDNGVCNCIPINDCHEVSLSTKVVGTWVDGSRGNKRFTQYDITITNNLNTNIKQIYIATDYTLRLRDHSNTSIWNVNLLPNGILTLPSYQPSINAHASFTFGFILEGTQPANLNVLSVSF.

The signal sequence occupies residues 1–19; sequence MRSILILLSLLLTIAFASA.

The protein resides in the secreted. This chain is Stalk-specific protein A (staA), found in Dictyostelium discoideum (Social amoeba).